Here is a 156-residue protein sequence, read N- to C-terminus: Transcription elongation factor GreA (156 aa).

Residues 2-78 (AKEIILTQEG…MISKAKLIED (77 aa)) are a coiled coil.

It belongs to the GreA/GreB family.

Necessary for efficient RNA polymerase transcription elongation past template-encoded arresting sites. The arresting sites in DNA have the property of trapping a certain fraction of elongating RNA polymerases that pass through, resulting in locked ternary complexes. Cleavage of the nascent transcript by cleavage factors such as GreA or GreB allows the resumption of elongation from the new 3'terminus. GreA releases sequences of 2 to 3 nucleotides. The chain is Transcription elongation factor GreA from Mesoplasma florum (strain ATCC 33453 / NBRC 100688 / NCTC 11704 / L1) (Acholeplasma florum).